Here is a 129-residue protein sequence, read N- to C-terminus: Small ribosomal subunit protein eS8 (129 aa).

The segment at 1–29 is disordered; the sequence is MSVWQGRSRRKPTGGLYRPARKKRKYEMG.

The protein belongs to the eukaryotic ribosomal protein eS8 family. Part of the 30S ribosomal subunit.

This is Small ribosomal subunit protein eS8 (rps8e) from Methanocaldococcus jannaschii (strain ATCC 43067 / DSM 2661 / JAL-1 / JCM 10045 / NBRC 100440) (Methanococcus jannaschii).